The sequence spans 345 residues: Eukaryotic translation initiation factor 3 subunit F (345 aa).

One can recognise an MPN domain in the interval 30–166 (VVIQPQAIFS…TRAYISAPVG (137 aa)). Residues 308–345 (GGESGGAESGAQRGQRGGKGGRGGQQRNQERGAEEARA) are disordered. A compositionally biased stretch (gly residues) spans 322–331 (QRGGKGGRGG). Basic and acidic residues predominate over residues 335-345 (NQERGAEEARA).

This sequence belongs to the eIF-3 subunit F family. Component of the eukaryotic translation initiation factor 3 (eIF-3) complex.

The protein localises to the cytoplasm. Its function is as follows. Component of the eukaryotic translation initiation factor 3 (eIF-3) complex, which is involved in protein synthesis of a specialized repertoire of mRNAs and, together with other initiation factors, stimulates binding of mRNA and methionyl-tRNAi to the 40S ribosome. The eIF-3 complex specifically targets and initiates translation of a subset of mRNAs involved in cell proliferation. This chain is Eukaryotic translation initiation factor 3 subunit F, found in Aspergillus clavatus (strain ATCC 1007 / CBS 513.65 / DSM 816 / NCTC 3887 / NRRL 1 / QM 1276 / 107).